The following is a 206-amino-acid chain: Uridine kinase (206 aa).

An ATP-binding site is contributed by 11–18; that stretch reads GGTGSGKS.

Belongs to the uridine kinase family.

The protein localises to the cytoplasm. The catalysed reaction is uridine + ATP = UMP + ADP + H(+). The enzyme catalyses cytidine + ATP = CMP + ADP + H(+). The protein operates within pyrimidine metabolism; CTP biosynthesis via salvage pathway; CTP from cytidine: step 1/3. It functions in the pathway pyrimidine metabolism; UMP biosynthesis via salvage pathway; UMP from uridine: step 1/1. In Clostridium botulinum (strain Okra / Type B1), this protein is Uridine kinase.